The following is a 515-amino-acid chain: Fatty acyl-CoA reductase 1 (515 aa).

Topologically, residues 1 to 465 (MVSIPEYYEG…ARKHLNKLRN (465 aa)) are cytoplasmic. Residues 451–507 (SGLPAARKHLNKLRNIRYGFNTILVILIWRIFIARSQMARNIWYFVVSLCYKFLSYF) form a necessary and sufficient for PEX19-mediated localization into peroxisome membrane region. A helical transmembrane segment spans residues 466-483 (IRYGFNTILVILIWRIFI). The Peroxisomal portion of the chain corresponds to 484-515 (ARSQMARNIWYFVVSLCYKFLSYFRASSTMRY).

Belongs to the fatty acyl-CoA reductase family. In terms of assembly, interacts with PEX19; PEX19 mediates the targeting of FAR1 to peroxisomes.

The protein localises to the peroxisome membrane. It catalyses the reaction a long-chain fatty acyl-CoA + 2 NADPH + 2 H(+) = a long-chain primary fatty alcohol + 2 NADP(+) + CoA. It carries out the reaction hexadecanoyl-CoA + 2 NADPH + 2 H(+) = hexadecan-1-ol + 2 NADP(+) + CoA. The enzyme catalyses octadecanoyl-CoA + 2 NADPH + 2 H(+) = octadecan-1-ol + 2 NADP(+) + CoA. The catalysed reaction is eicosanoyl-CoA + 2 NADPH + 2 H(+) = eicosan-1-ol + 2 NADP(+) + CoA. It catalyses the reaction (9Z)-octadecenoyl-CoA + 2 NADPH + 2 H(+) = (9Z)-octadecen-1-ol + 2 NADP(+) + CoA. It carries out the reaction (9Z,12Z)-octadecadienoyl-CoA + 2 NADPH + 2 H(+) = (9Z,12Z)-octadecadien-1-ol + 2 NADP(+) + CoA. The enzyme catalyses 16-methylheptadecanoyl-CoA + 2 NADPH + 2 H(+) = 16-methylheptadecan-1-ol + 2 NADP(+) + CoA. The catalysed reaction is 18-methylnonadecanoyl-CoA + 2 NADPH + 2 H(+) = 18-methylnonadecan-1-ol + 2 NADP(+) + CoA. Catalyzes the reduction of saturated and unsaturated C16 or C18 fatty acyl-CoA to fatty alcohols. It plays an essential role in the production of ether lipids/plasmalogens which synthesis requires fatty alcohols. In parallel, it is also required for wax monoesters production since fatty alcohols also constitute a substrate for their synthesis. This Homo sapiens (Human) protein is Fatty acyl-CoA reductase 1.